Reading from the N-terminus, the 406-residue chain is Testis-specific Y-encoded-like protein 5 (406 aa).

Basic residues predominate over residues 1–25; sequence MSGRSRGRKSSRAKGRGKGRARARV. Disordered stretches follow at residues 1–67, 132–164, and 382–406; these read MSGR…PAEL, IGNR…PKMA, and RGEK…RQPN. The span at 27-38 shows a compositional bias: basic and acidic residues; it reads AAAEDAWHDEKP. A compositionally biased stretch (low complexity) spans 49 to 62; the sequence is AAAQVQAGAAQGGA. Positions 382–392 are enriched in basic and acidic residues; the sequence is RGEKGKEERPG.

This sequence belongs to the nucleosome assembly protein (NAP) family. Interacts with USP7.

Functionally, involved in modulation of cell growth and cellular response to gamma radiation probably via regulation of the Akt signaling pathway. Involved in regulation of p53/TP53. Suppresses p53/TP53 protein levels and promotes its ubiquitination; the function is dependent on USP7 and independent on MDM2. Proposed to displace p53/TP53 from interaction with USP7. This Mus musculus (Mouse) protein is Testis-specific Y-encoded-like protein 5 (Tspyl5).